Here is an 874-residue protein sequence, read N- to C-terminus: Pyruvate, phosphate dikinase (874 aa).

Residues 2 to 340 form an N-terminal region; it reads AKWVYKFEEG…LYFLQTRNGK (339 aa). Arg-92 serves as a coordination point for ATP. The tract at residues 340–399 is linker 1; sequence KRTAPAALQIACDLVDEGMITEEEAVVRIEAKSLDQLLHPTFNPAALKAGEVIGSALPAS. The central stretch occupies residues 400-498; the sequence is PGAAAGKVYF…TFAEGDYISL (99 aa). Phosphothreonine; by PDRP1 is present on Thr-453. His-455 (tele-phosphohistidine intermediate) is an active-site residue. Residues 499–533 form a linker 2 region; the sequence is DGSTGKIYKGDIETQEASVSGSFERIMVWADKFRT. The segment at 534 to 874 is C-terminal; sequence LKVRTNADTP…AAAQAALNNK (341 aa). Substrate-binding residues include Arg-561, Arg-617, Glu-745, Gly-766, Thr-767, Asn-768, and Asp-769. Mg(2+) is bound at residue Glu-745. Asp-769 lines the Mg(2+) pocket. Catalysis depends on Cys-831, which acts as the Proton donor.

The protein belongs to the PEP-utilizing enzyme family. Homodimer. Mg(2+) is required as a cofactor. Phosphorylation of Thr-453 in the dark inactivates the enzyme. Dephosphorylation upon light stimulation reactivates the enzyme.

It catalyses the reaction pyruvate + phosphate + ATP = phosphoenolpyruvate + AMP + diphosphate + H(+). Activated by light-induced dephosphorylation. Inhibited by dark-induced phosphorylation. Both reactions are catalyzed by PDRP1. Its function is as follows. Catalyzes the reversible phosphorylation of pyruvate and phosphate. In E.histolytica and C.symbiosus, PPDK functions in the direction of ATP synthesis. The polypeptide is Pyruvate, phosphate dikinase (ppdK) (Clostridium symbiosum (Bacteroides symbiosus)).